The primary structure comprises 843 residues: Protein P (843 aa).

Residues methionine 1–glutamine 177 are terminal protein domain (TP). A spacer region spans residues aspartate 178 to isoleucine 346. 2 disordered regions span residues lysine 220–glutamate 258 and serine 292–serine 319. Over residues proline 308–serine 319 the composition is skewed to low complexity. Residues aspartate 347–glutamine 690 form a polymerase/reverse transcriptase domain (RT) region. The Reverse transcriptase domain occupies glutamate 357–isoleucine 600. Aspartate 429, aspartate 551, and aspartate 552 together coordinate Mg(2+).

It belongs to the hepadnaviridae P protein family.

The enzyme catalyses DNA(n) + a 2'-deoxyribonucleoside 5'-triphosphate = DNA(n+1) + diphosphate. It carries out the reaction Endonucleolytic cleavage to 5'-phosphomonoester.. Its activity is regulated as follows. Activated by host HSP70 and HSP40 in vitro to be able to bind the epsilon loop of the pgRNA. Because deletion of the RNase H region renders the protein partly chaperone-independent, the chaperones may be needed indirectly to relieve occlusion of the RNA-binding site by this domain. Inhibited by several reverse-transcriptase inhibitors: Lamivudine, Adefovir and Entecavir. In terms of biological role, multifunctional enzyme that converts the viral RNA genome into dsDNA in viral cytoplasmic capsids. This enzyme displays a DNA polymerase activity that can copy either DNA or RNA templates, and a ribonuclease H (RNase H) activity that cleaves the RNA strand of RNA-DNA heteroduplexes in a partially processive 3'- to 5'-endonucleasic mode. Neo-synthesized pregenomic RNA (pgRNA) are encapsidated together with the P protein, and reverse-transcribed inside the nucleocapsid. Initiation of reverse-transcription occurs first by binding the epsilon loop on the pgRNA genome, and is initiated by protein priming, thereby the 5'-end of (-)DNA is covalently linked to P protein. Partial (+)DNA is synthesized from the (-)DNA template and generates the relaxed circular DNA (RC-DNA) genome. After budding and infection, the RC-DNA migrates in the nucleus, and is converted into a plasmid-like covalently closed circular DNA (cccDNA). The activity of P protein does not seem to be necessary for cccDNA generation, and is presumably released from (+)DNA by host nuclear DNA repair machinery. The protein is Protein P of Hepatitis B virus genotype B1 (isolate Japan/Yamagata-2/1998) (HBV-B).